We begin with the raw amino-acid sequence, 457 residues long: MEDELLNFNYTDSGLPVIIKVIGVGGGGGNAVKNMYHGKVRDVSFLLCNTDVQALDRSEVPDRLVLGREVTNGLGAGSRPEVARRAAEASEADIRKILDDGHTRMVFVTAGMGGGTGTGAAPVIGRIARELNILTVGIVTIPFVFEGKRKILQALEGVEEMRKNVDALLVVNNERLRIIYKDLKLDNAFAKADETLTNAANGIAEMIMKEGTINLDFADVHTTLKDGGIAIISTGYGEGPDRMEQAINEALTSPLLNNNDIFKARRVLFNIYQGTEDPLGTDELSAINELTAKIETGFDTIWGYTTDPELGKKVKITILASGFDLDTTRESIRIGDNLGNVINDPISSREIETQNERDNDLINRYYRPDELEKVKVVDFKPIILNLDELDNDELIMALEEKPAYSRTGVLLSRIDNIRMRIAESAGRLKKDVVRSEESERPAFESERSSSPTTISFN.

Residues 26-30 (GGGGN), 115-117 (GTG), Glu146, Lys150, and Asp193 contribute to the GTP site. Positions 429–447 (KKDVVRSEESERPAFESER) are enriched in basic and acidic residues. A disordered region spans residues 429 to 457 (KKDVVRSEESERPAFESERSSSPTTISFN). The segment covering 448 to 457 (SSSPTTISFN) has biased composition (polar residues).

Belongs to the FtsZ family. As to quaternary structure, homodimer. Polymerizes to form a dynamic ring structure in a strictly GTP-dependent manner. Interacts directly with several other division proteins.

The protein resides in the cytoplasm. In terms of biological role, essential cell division protein that forms a contractile ring structure (Z ring) at the future cell division site. The regulation of the ring assembly controls the timing and the location of cell division. One of the functions of the FtsZ ring is to recruit other cell division proteins to the septum to produce a new cell wall between the dividing cells. Binds GTP and shows GTPase activity. This chain is Cell division protein FtsZ, found in Porphyromonas gingivalis (strain ATCC BAA-308 / W83).